The primary structure comprises 283 residues: Protein FAM170B (283 aa).

The segment covering 1–11 has biased composition (basic and acidic residues); that stretch reads MKCYFTDHRGE. 2 disordered regions span residues 1-58 and 246-283; these read MKCY…REEG and AQGQAHDQQLEEEQSPSDNSECSRPQGEVLSAQQQEKQ.

It belongs to the FAM170 family. Interacts with GOPC. In terms of tissue distribution, exclusively expressed in adult testis.

It localises to the cytoplasmic vesicle. It is found in the secretory vesicle. Its subcellular location is the acrosome. The protein resides in the acrosome outer membrane. Plays a role in fertilization through the acrosome reaction. The polypeptide is Protein FAM170B (Homo sapiens (Human)).